Here is a 328-residue protein sequence, read N- to C-terminus: Small neutral protease regulatory protein (328 aa).

The HTH lysR-type domain occupies M1–T60. The H-T-H motif DNA-binding region spans L20–T39.

The protein belongs to the LysR transcriptional regulatory family.

In terms of biological role, transcriptional trans-activator of the gene (mprA) for the small neutral protease. The chain is Small neutral protease regulatory protein (mprR) from Streptomyces coelicolor (strain ATCC BAA-471 / A3(2) / M145).